Reading from the N-terminus, the 429-residue chain is UDP-N-acetylglucosamine 1-carboxyvinyltransferase (429 aa).

Position 22–23 (K22–N23) interacts with phosphoenolpyruvate. R102 is a binding site for UDP-N-acetyl-alpha-D-glucosamine. C126 acts as the Proton donor in catalysis. Residue C126 is modified to 2-(S-cysteinyl)pyruvic acid O-phosphothioketal. UDP-N-acetyl-alpha-D-glucosamine is bound by residues R131–L135, D316, and I338.

This sequence belongs to the EPSP synthase family. MurA subfamily.

It localises to the cytoplasm. It carries out the reaction phosphoenolpyruvate + UDP-N-acetyl-alpha-D-glucosamine = UDP-N-acetyl-3-O-(1-carboxyvinyl)-alpha-D-glucosamine + phosphate. Its pathway is cell wall biogenesis; peptidoglycan biosynthesis. Cell wall formation. Adds enolpyruvyl to UDP-N-acetylglucosamine. The polypeptide is UDP-N-acetylglucosamine 1-carboxyvinyltransferase (Rhodopseudomonas palustris (strain HaA2)).